Reading from the N-terminus, the 610-residue chain is Elongation factor 4 (610 aa).

The tr-type G domain occupies 11–193 (EKIRNFSIIA…QIVEKVPAPT (183 aa)). Residues 23–28 (DHGKST) and 140–143 (NKID) contribute to the GTP site.

It belongs to the TRAFAC class translation factor GTPase superfamily. Classic translation factor GTPase family. LepA subfamily.

The protein localises to the cell membrane. The catalysed reaction is GTP + H2O = GDP + phosphate + H(+). Functionally, required for accurate and efficient protein synthesis under certain stress conditions. May act as a fidelity factor of the translation reaction, by catalyzing a one-codon backward translocation of tRNAs on improperly translocated ribosomes. Back-translocation proceeds from a post-translocation (POST) complex to a pre-translocation (PRE) complex, thus giving elongation factor G a second chance to translocate the tRNAs correctly. Binds to ribosomes in a GTP-dependent manner. This Streptococcus suis (strain 98HAH33) protein is Elongation factor 4.